The chain runs to 725 residues: NAD(+) hydrolase SARM1 (725 aa).

The N-terminal 27 residues, 1-27, are a transit peptide targeting the mitochondrion; that stretch reads MVLTILFSAYKLCRFFAMSSPRPGAER. One copy of the ARM 1 repeat lies at 60-100; that stretch reads EVQGALERALPELQQALSALKQAGGGRAVGAGLAEVFQLVE. Residues tryptophan 103, arginine 110, 149 to 158, and 191 to 194 contribute to the NAD(+) site; these read EQILVAENRR and HMFK. ARM repeat units follow at residues 114 to 153, 155 to 194, 197 to 236, 238 to 281, 282 to 315, 316 to 355, and 360 to 403; these read QGLC…QILV, ENRR…HMFK, EETC…NCAM, GGQA…LATN, KEVE…CLVD, ASDT…AEAV, and KNRN…EEVP. 2 consecutive SAM domains span residues 413 to 477 and 483 to 549; these read WKEA…LKTF and CDRS…MLHS. Serine 549 and serine 559 each carry phosphoserine. One can recognise a TIR domain in the interval 561–704; that stretch reads DVPDVFISYR…KIIRFLQGRS (144 aa). NAD(+)-binding positions include 570–571 and glutamate 600; that span reads RR. Glutamate 643 is an active-site residue. The tract at residues 705-725 is disordered; the sequence is SRDSSAGSDTSLEGAAPMGPT.

This sequence belongs to the SARM1 family. In terms of assembly, homooctamer; forms an octameric ring via SAM domains. Interacts with TICAM1/TRIF and thereby interferes with TICAM1/TRIF function. Interacts with MAPK10/JNK3 and SDC2 (via cytoplasmic domain). Post-translationally, phosphorylation at Ser-549 by JNK kinases (MAPK8, MAPK9 and /or MAPK10) enhance the NAD(+) hydrolase (NADase) activity. Phosphorylation at Ser-549 and subsequent activation takes place in response to oxidative stress conditions and inhibits mitochondrial respiration. In terms of tissue distribution, highest expression seen in the spleen and the brain, followed by lung, kidney, liver and other tissues.

The protein resides in the cytoplasm. The protein localises to the cell projection. It localises to the axon. Its subcellular location is the dendrite. It is found in the synapse. The protein resides in the mitochondrion. The enzyme catalyses NAD(+) + H2O = ADP-D-ribose + nicotinamide + H(+). The catalysed reaction is NAD(+) = cyclic ADP-beta-D-ribose + nicotinamide + H(+). It carries out the reaction NADP(+) + H2O = ADP-D-ribose 2'-phosphate + nicotinamide + H(+). With respect to regulation, autoinhibited: in the inactive state, the enzymatic TIR domain is held apart by the autoinhibiting ARM repeats. NAD(+)-binding to ARM repeats maintains an inactive state by promoting interaction between ARM repeats and the TIR domain, thereby facilitating inhibition of the enzymatic TIR domain. Following activation, possibly by nicotinamide mononucleotide (NMN), auto-inhibitory interactions are released, allowing self-association of the TIR domains and subsequent activation of the NAD(+) hydrolase (NADase) activity. Self-association of TIR domains is facilitated by the octamer of SAM domains. Its function is as follows. NAD(+) hydrolase, which plays a key role in axonal degeneration following injury by regulating NAD(+) metabolism. Acts as a negative regulator of MYD88- and TRIF-dependent toll-like receptor signaling pathway by promoting Wallerian degeneration, an injury-induced form of programmed subcellular death which involves degeneration of an axon distal to the injury site. Wallerian degeneration is triggered by NAD(+) depletion: in response to injury, SARM1 is activated and catalyzes cleavage of NAD(+) into ADP-D-ribose (ADPR), cyclic ADPR (cADPR) and nicotinamide; NAD(+) cleavage promoting cytoskeletal degradation and axon destruction. Also able to hydrolyze NADP(+), but not other NAD(+)-related molecules. Can activate neuronal cell death in response to stress. Regulates dendritic arborization through the MAPK4-JNK pathway. Involved in innate immune response: inhibits both TICAM1/TRIF- and MYD88-dependent activation of JUN/AP-1, TRIF-dependent activation of NF-kappa-B and IRF3, and the phosphorylation of MAPK14/p38. The protein is NAD(+) hydrolase SARM1 of Sus scrofa (Pig).